The sequence spans 337 residues: Zinc finger protein 488 (337 aa).

The segment covering 1–10 (MAAGTSTLLS) has biased composition (polar residues). Disordered regions lie at residues 1–32 (MAAG…SVEK), 55–83 (SDTA…PRLD), and 146–179 (SAWP…MLLA). The interval 69 to 184 (TELSLPTAPN…PMLLAGGSAE (116 aa)) is important for transcriptional repression activity. C2H2-type zinc fingers lie at residues 272-299 (NWCA…KREH) and 314-336 (LTCP…MASH). A Nuclear localization signal motif is present at residues 295–302 (HKREHVGP).

This sequence belongs to the krueppel C2H2-type zinc-finger protein family. In terms of assembly, interacts with OLIG2.

It localises to the nucleus. Its function is as follows. Transcriptional repressor. Plays a role in oligodendrocyte differentiation, together with OLIG2. Mediates Notch signaling-activated formation of oligodendrocyte precursors. Promotes differentiation of adult neural stem progenitor cells (NSPCs) into mature oligodendrocytes and contributes to remyelination following nerve injury. This Mus musculus (Mouse) protein is Zinc finger protein 488 (Znf488).